Reading from the N-terminus, the 307-residue chain is Thymidylate synthase (307 aa).

The disordered stretch occupies residues 1–22 (MLVEGSELQSGAQQPRTEAPQH). Residues 7 to 16 (ELQSGAQQPR) are compositionally biased toward polar residues. Arg44 contributes to the dUMP binding site. The residue at position 108 (Ser108) is a Phosphoserine. DUMP is bound by residues 169–170 (RR), 189–190 (CH), 209–212 (RSGD), Asn220, and 250–252 (HIY). Catalysis depends on Cys189, which acts as the Nucleophile. Position 212 (Asp212) interacts with (6R)-5,10-methylene-5,6,7,8-tetrahydrofolate. Glycyl lysine isopeptide (Lys-Gly) (interchain with G-Cter in SUMO2) cross-links involve residues Lys286 and Lys302. Position 306 (Ala306) interacts with (6R)-5,10-methylene-5,6,7,8-tetrahydrofolate.

It belongs to the thymidylate synthase family. In terms of assembly, homodimer.

The protein localises to the nucleus. Its subcellular location is the cytoplasm. It localises to the mitochondrion. It is found in the mitochondrion matrix. The protein resides in the mitochondrion inner membrane. It catalyses the reaction dUMP + (6R)-5,10-methylene-5,6,7,8-tetrahydrofolate = 7,8-dihydrofolate + dTMP. It functions in the pathway pyrimidine metabolism; dTTP biosynthesis. Functionally, catalyzes the reductive methylation of 2'-deoxyuridine 5'-monophosphate (dUMP) to thymidine 5'-monophosphate (dTMP), using the cosubstrate, 5,10- methylenetetrahydrofolate (CH2H4folate) as a 1-carbon donor and reductant and contributes to the de novo mitochondrial thymidylate biosynthesis pathway. In Rattus norvegicus (Rat), this protein is Thymidylate synthase (Tyms).